The sequence spans 331 residues: Ornithine lipid hydroxylase OlsE (331 aa).

Helical transmembrane passes span 13 to 33 (VSSL…YFAF), 37 to 57 (MHLL…ALFE), 85 to 105 (GGVQ…ATVA), 120 to 140 (WPMA…LYMA), and 189 to 209 (LLGA…FIGL). Positions 126 to 260 (VVLGLVIAEF…LVIWDQLLGT (135 aa)) constitute a Fatty acid hydroxylase domain.

It belongs to the sterol desaturase family.

It localises to the cell inner membrane. The protein operates within lipid metabolism. Functionally, involved in the biosynthesis of ornithine lipids (OLs), which are phosphorus-free membrane lipids. Is responsible for the hydroxylation of OL within the ornithine moiety. This is Ornithine lipid hydroxylase OlsE from Rhizobium tropici.